A 127-amino-acid chain; its full sequence is Small ribosomal subunit protein uS11 (127 aa).

Belongs to the universal ribosomal protein uS11 family. Part of the 30S ribosomal subunit. Interacts with proteins S7 and S18. Binds to IF-3.

Its function is as follows. Located on the platform of the 30S subunit, it bridges several disparate RNA helices of the 16S rRNA. Forms part of the Shine-Dalgarno cleft in the 70S ribosome. This chain is Small ribosomal subunit protein uS11, found in Chlorobium chlorochromatii (strain CaD3).